The chain runs to 149 residues: ER export of PMA1 protein 1 (149 aa).

At 1–6 (MNLYGY) the chain is on the lumenal side. The chain crosses the membrane as a helical; Signal-anchor for type II membrane protein span at residues 7–27 (FLLLIIVIAFIALLPLFSGIG). Residues 28–149 (TFKLTKPKSS…KKNEAYEGFV (122 aa)) lie on the Cytoplasmic side of the membrane.

Interacts with PMA1 and PSG1.

The protein localises to the endoplasmic reticulum membrane. Its subcellular location is the cytoplasmic vesicle. It localises to the COPI-coated vesicle membrane. It is found in the COPII-coated vesicle membrane. The protein resides in the golgi apparatus membrane. In terms of biological role, specific cargo receptor protein for the plasma membrane ATPase PMA1 that acts with PSG1 to promote the transport and maturation of PMA1. EXP1 and PSG1 probably act sequentially to promote PMA1 sorting between the ER and the Golgi, with EXP1 promoting PMA1 export from the ER to the Golgi while PSG1 has a role in PMA1 maturation or quality control in the Golgi. The chain is ER export of PMA1 protein 1 from Saccharomyces cerevisiae (strain ATCC 204508 / S288c) (Baker's yeast).